The chain runs to 1023 residues: Probable histidine kinase 3 (1023 aa).

The Cytoplasmic segment spans residues 1–80 (MDEMSCGGGG…RGWRVVRETW (80 aa)). The helical transmembrane segment at 81–101 (WWVLLLWILAGSLGSFYLFLF) threads the bilayer. Residues 102 to 387 (MNAQSLDKRR…CRFEKKPPWP (286 aa)) lie on the Extracellular side of the membrane. A CHASE domain is found at 151-352 (TPSAIDQMTF…TNESPISMYG (202 aa)). Residues 388 to 408 (WLAITSSFGTLVIALLTGHIF) traverse the membrane as a helical segment. At 409-1023 (QATVHRIAKV…RFFQNHDQVE (615 aa)) the chain is on the cytoplasmic side. The region spanning 445 to 715 (TVSHEIRTPM…TFTFTAVLMR (271 aa)) is the Histidine kinase domain. At His-448 the chain carries Phosphohistidine; by autocatalysis. Response regulatory domains follow at residues 732-854 (NALV…RRAL) and 880-1016 (QIIV…ARFF). Asp-783 carries the post-translational modification 4-aspartylphosphate. Residues 812-831 (LFLLGSSASSPKGGSDTSRE) form a disordered region. A compositionally biased stretch (polar residues) spans 817 to 827 (SSASSPKGGSD). A 4-aspartylphosphate modification is found at Asp-930.

In terms of processing, activation probably requires a transfer of a phosphate group between a His in the transmitter domain and an Asp of the receiver domain.

It localises to the cell membrane. The enzyme catalyses ATP + protein L-histidine = ADP + protein N-phospho-L-histidine.. Functionally, cytokinin receptor related to bacterial two-component regulators. Functions as a histidine kinase and transmits the stress signal to a downstream MAPK cascade. This Oryza sativa subsp. indica (Rice) protein is Probable histidine kinase 3.